Reading from the N-terminus, the 415-residue chain is MFDRATQTLAAIDPEITAAIDAEVRRQEEHIELIASENYTSPAVMAAQGSQLTNKYAEGYPGKRYYGGCEHVDVVEQLAIDRAKQLFGAQNANVQPNSGSQANQAVFFGLLQPGDTIMGLSLAEGGHLTHGMPLNMSGKWFKVVSYGLDAQEDIDYDAMERLAHEHKPKLIIAGASAFALRIDFERFAKVAKAVGAYFMVDMAHYAGLIAAGVYPNPVPFADVVTTTTHKTLRGPRGGLILMTDAVAKQINSAIFPGIQGGPLMHVIAGKAVAFQEALQPEFKAYQEQVVKNATAMAETLTARGLRIVSGRTESHVMLVDLRPKGITGKEAEALLGRAHITCNKNGIPNDPQKPMVTSGIRLGSPAMTTRGFKEEQAVLTANLIADVLEAPNDEAVLERVRAQVAQLTRDFPVYR.

(6S)-5,6,7,8-tetrahydrofolate is bound by residues leucine 122 and 126–128 (GHL). Lysine 230 carries the N6-(pyridoxal phosphate)lysine modification.

This sequence belongs to the SHMT family. In terms of assembly, homodimer. The cofactor is pyridoxal 5'-phosphate.

Its subcellular location is the cytoplasm. The enzyme catalyses (6R)-5,10-methylene-5,6,7,8-tetrahydrofolate + glycine + H2O = (6S)-5,6,7,8-tetrahydrofolate + L-serine. It functions in the pathway one-carbon metabolism; tetrahydrofolate interconversion. Its pathway is amino-acid biosynthesis; glycine biosynthesis; glycine from L-serine: step 1/1. Catalyzes the reversible interconversion of serine and glycine with tetrahydrofolate (THF) serving as the one-carbon carrier. This reaction serves as the major source of one-carbon groups required for the biosynthesis of purines, thymidylate, methionine, and other important biomolecules. Also exhibits THF-independent aldolase activity toward beta-hydroxyamino acids, producing glycine and aldehydes, via a retro-aldol mechanism. In Leptothrix cholodnii (strain ATCC 51168 / LMG 8142 / SP-6) (Leptothrix discophora (strain SP-6)), this protein is Serine hydroxymethyltransferase.